A 131-amino-acid polypeptide reads, in one-letter code: Protein Turandot M (131 aa).

The N-terminal stretch at 1–23 (MNPAIYLSCLVVFSLLLLGKVNA) is a signal peptide.

The protein belongs to the Turandot family.

The protein resides in the secreted. In terms of biological role, a humoral factor that may play a role in stress tolerance. Requires Mekk1 expression in the fat body to regulate response to septic injury and consequent immune response. The sequence is that of Protein Turandot M from Drosophila erecta (Fruit fly).